The sequence spans 320 residues: Cytochrome f (320 aa).

Residues 1 to 35 (MENRNTFSWVKEQMTRSISVSIMIYVITQTSISNA) form the signal peptide. 4 residues coordinate heme: tyrosine 36, cysteine 56, cysteine 59, and histidine 60. A helical membrane pass occupies residues 286-306 (VQGLLFFFASVILAQVFLVLK).

It belongs to the cytochrome f family. In terms of assembly, the 4 large subunits of the cytochrome b6-f complex are cytochrome b6, subunit IV (17 kDa polypeptide, petD), cytochrome f and the Rieske protein, while the 4 small subunits are PetG, PetL, PetM and PetN. The complex functions as a dimer. Heme is required as a cofactor.

Its subcellular location is the plastid. It localises to the chloroplast thylakoid membrane. Functionally, component of the cytochrome b6-f complex, which mediates electron transfer between photosystem II (PSII) and photosystem I (PSI), cyclic electron flow around PSI, and state transitions. The protein is Cytochrome f of Agrostis stolonifera (Creeping bentgrass).